A 495-amino-acid polypeptide reads, in one-letter code: Protein nucleotidyltransferase YdiU (495 aa).

ATP is bound by residues G92, G94, R95, K114, D126, G127, R177, and R184. The active-site Proton acceptor is the D261. Residues N262 and D271 each coordinate Mg(2+). D271 contacts ATP.

This sequence belongs to the SELO family. It depends on Mg(2+) as a cofactor. Mn(2+) serves as cofactor.

The catalysed reaction is L-seryl-[protein] + ATP = 3-O-(5'-adenylyl)-L-seryl-[protein] + diphosphate. It catalyses the reaction L-threonyl-[protein] + ATP = 3-O-(5'-adenylyl)-L-threonyl-[protein] + diphosphate. The enzyme catalyses L-tyrosyl-[protein] + ATP = O-(5'-adenylyl)-L-tyrosyl-[protein] + diphosphate. It carries out the reaction L-histidyl-[protein] + UTP = N(tele)-(5'-uridylyl)-L-histidyl-[protein] + diphosphate. The catalysed reaction is L-seryl-[protein] + UTP = O-(5'-uridylyl)-L-seryl-[protein] + diphosphate. It catalyses the reaction L-tyrosyl-[protein] + UTP = O-(5'-uridylyl)-L-tyrosyl-[protein] + diphosphate. Its function is as follows. Nucleotidyltransferase involved in the post-translational modification of proteins. It can catalyze the addition of adenosine monophosphate (AMP) or uridine monophosphate (UMP) to a protein, resulting in modifications known as AMPylation and UMPylation. This chain is Protein nucleotidyltransferase YdiU, found in Bordetella bronchiseptica (strain ATCC BAA-588 / NCTC 13252 / RB50) (Alcaligenes bronchisepticus).